The chain runs to 89 residues: Small ribosomal subunit protein uS15 (89 aa).

Belongs to the universal ribosomal protein uS15 family. Part of the 30S ribosomal subunit. Forms a bridge to the 50S subunit in the 70S ribosome, contacting the 23S rRNA.

Functionally, one of the primary rRNA binding proteins, it binds directly to 16S rRNA where it helps nucleate assembly of the platform of the 30S subunit by binding and bridging several RNA helices of the 16S rRNA. Forms an intersubunit bridge (bridge B4) with the 23S rRNA of the 50S subunit in the ribosome. The chain is Small ribosomal subunit protein uS15 from Leifsonia xyli subsp. xyli (strain CTCB07).